Here is a 145-residue protein sequence, read N- to C-terminus: MAVLTGLFGFFAYVRGAVSQRCFSTSGSLSAIQKMTRVRVVDNSALGNTPYHRPPRCIHVYNKSGVGKVGDQILLAIRGQKKKALIVGHRMPGSRMTPKFDSNNVVLIEDNGNPVGTRIKIPIPTSLRRREGEYSKVLAIAQNFV.

The transit peptide at 1–30 (MAVLTGLFGFFAYVRGAVSQRCFSTSGSLS) directs the protein to the mitochondrion.

Belongs to the universal ribosomal protein uL14 family. As to quaternary structure, component of the mitochondrial ribosome large subunit (39S) which comprises a 16S rRNA and about 50 distinct proteins. Interacts with MALSU1.

It is found in the mitochondrion. In terms of biological role, may form part of 2 intersubunit bridges in the assembled ribosome. Upon binding to MALSU1, intersubunit bridge formation is blocked, preventing ribosome formation and repressing translation. This is Large ribosomal subunit protein uL14m (Mrpl14) from Rattus norvegicus (Rat).